Here is a 394-residue protein sequence, read N- to C-terminus: Putative fimbrial assembly protein FimD, serogroup D (394 aa).

This is Putative fimbrial assembly protein FimD, serogroup D (fimD) from Dichelobacter nodosus (Bacteroides nodosus).